Consider the following 204-residue polypeptide: MSIMEYNGGSCVAMAGKNCVAIASDLRLGVQSISLTNNFPKVFAMGDKTYLGLTGLATDVQTLYELFRYKVNLYKFREERQIQPKTFANLVSSTLYEKRFGPYFSFPVVAGVSNDNTPFICGFDSIGCIDFAEDFIVSGTATEQLYGMCESVYEPNLEPDDLFETISQALLNAQDRDCISGWGCVVYVITADKCIKRLVKGRQD.

Belongs to the peptidase T1B family. The 26S proteasome consists of a 20S proteasome core and two 19S regulatory subunits. The 20S proteasome core is composed of 28 subunits that are arranged in four stacked rings, resulting in a barrel-shaped structure. The two end rings are each formed by seven alpha subunits, and the two central rings are each formed by seven beta subunits. The catalytic chamber with the active sites is on the inside of the barrel.

It localises to the cytoplasm. The protein localises to the nucleus. Non-catalytic component of the proteasome, a multicatalytic proteinase complex which is characterized by its ability to cleave peptides with Arg, Phe, Tyr, Leu, and Glu adjacent to the leaving group at neutral or slightly basic pH. The proteasome has an ATP-dependent proteolytic activity. This Schizosaccharomyces pombe (strain 972 / ATCC 24843) (Fission yeast) protein is Probable proteasome subunit beta type-3 (pup3).